A 393-amino-acid polypeptide reads, in one-letter code: MFNNHEIDTILSTLRMEADPSLHPLFEQFEKFYEEKLWFQLSESLTKFFDDAKSTPLRLRLYDNFVSKFYDKINQLSVVKYLLASLKDSKDFDESLKYLDDLKAQFQELDSKKQRNNGSKDHGDGILLIDSEIARTYLLKNDLVKARDLLDDLEKTLDKKDSIPLRITNSFYSTNSQYFKFKNDFNSFYYTSLLYLSTLEPSTSITLAERQQLAYDLSISALLGDKIYNFGELLHHPIMETIVNDSNYDWLFQLLNALTVGDFDKFDSLIKVQISKIPILAQHESFLRQKICLMTLIETVFVKNIRMLSFEDISKATHLPKDNVEHLVMRAISLGLLKGSIDQVNELVTISWVQPRIISGDQITKMKDRLVEWNDQVEKLGKKMEARGQSIWV.

Residues 187–355 (SFYYTSLLYL…ELVTISWVQP (169 aa)) form the PCI domain.

The protein belongs to the proteasome subunit S11 family.

In terms of biological role, acts as a regulatory subunit of the 26S proteasome which is involved in the ATP-dependent degradation of ubiquitinated proteins. This Saccharomyces cerevisiae (strain ATCC 204508 / S288c) (Baker's yeast) protein is 26S proteasome regulatory subunit RPN9 (RPN9).